Consider the following 138-residue polypeptide: Large ribosomal subunit protein uL14 (138 aa).

The protein belongs to the universal ribosomal protein uL14 family. As to quaternary structure, part of the 50S ribosomal subunit. Forms a cluster with proteins L3 and L24e, part of which may contact the 16S rRNA in 2 intersubunit bridges.

In terms of biological role, binds to 23S rRNA. Forms part of two intersubunit bridges in the 70S ribosome. This chain is Large ribosomal subunit protein uL14, found in Metallosphaera sedula (strain ATCC 51363 / DSM 5348 / JCM 9185 / NBRC 15509 / TH2).